The sequence spans 396 residues: Flagellar hook protein FlgE (396 aa).

Belongs to the flagella basal body rod proteins family.

It localises to the bacterial flagellum basal body. The flagellum is required to cause a persistent disease in a murine model of infection. This is Flagellar hook protein FlgE (flgE) from Brucella melitensis biotype 1 (strain ATCC 23456 / CCUG 17765 / NCTC 10094 / 16M).